The primary structure comprises 712 residues: Small ribosomal subunit protein uS3c (712 aa).

Residues 1–118 (MGQKVHPLGF…IKVSKDLVTN (118 aa)) form an S3-like 1st part region. An intervening sequence (IVS) region spans residues 119 to 580 (LQKTRKYLFK…LQTAFLTQIE (462 aa)). Residues 581 to 712 (SQRKMYKANL…VWIFKGYSKI (132 aa)) are S3-like 2nd part.

Belongs to the universal ribosomal protein uS3 family. Part of the 30S ribosomal subunit.

It localises to the plastid. The protein resides in the chloroplast. The chain is Small ribosomal subunit protein uS3c (rps3) from Chlamydomonas reinhardtii (Chlamydomonas smithii).